The sequence spans 763 residues: Phosphoglycerol transferase I (763 aa).

A run of 4 helical transmembrane segments spans residues 1–21 (MSELLSFALFLASVLIYAWKA), 26–46 (WWFAATLTVLGLFVVLNITLF), 77–97 (ILPGIGIVLGLTAVFGALGWI), and 108–128 (FGYSLLALLLALGSVDASPAF).

Belongs to the OpgB family.

The protein resides in the cell inner membrane. It carries out the reaction a phosphatidylglycerol + a membrane-derived-oligosaccharide D-glucose = a 1,2-diacyl-sn-glycerol + a membrane-derived-oligosaccharide 6-(glycerophospho)-D-glucose.. The protein operates within glycan metabolism; osmoregulated periplasmic glucan (OPG) biosynthesis. Its function is as follows. Transfers a phosphoglycerol residue from phosphatidylglycerol to the membrane-bound nascent glucan backbones. The sequence is that of Phosphoglycerol transferase I from Escherichia coli O127:H6 (strain E2348/69 / EPEC).